The primary structure comprises 599 residues: Sulfite reductase [NADPH] flavoprotein alpha-component (599 aa).

The region spanning Ile-64–Val-202 is the Flavodoxin-like domain. Residues Ser-70–Ala-75, Ser-117–Gly-120, and Leu-153–Cys-162 each bind FMN. The 215-residue stretch at Glu-234–Pro-448 folds into the FAD-binding FR-type domain. Residues Thr-322, Ala-356, Arg-386–Ser-389, Thr-404–Gly-406, Tyr-410, and Gly-419–Ser-422 contribute to the FAD site. NADP(+) is bound by residues Ser-519–Arg-520, Lys-525–Gln-529, and Asp-561. Position 599 (Tyr-599) interacts with FAD.

This sequence belongs to the NADPH-dependent sulphite reductase flavoprotein subunit CysJ family. It in the N-terminal section; belongs to the flavodoxin family. In the C-terminal section; belongs to the flavoprotein pyridine nucleotide cytochrome reductase family. In terms of assembly, alpha(8)-beta(8). The alpha component is a flavoprotein, the beta component is a hemoprotein. The cofactor is FAD. Requires FMN as cofactor.

The catalysed reaction is hydrogen sulfide + 3 NADP(+) + 3 H2O = sulfite + 3 NADPH + 4 H(+). The protein operates within sulfur metabolism; hydrogen sulfide biosynthesis; hydrogen sulfide from sulfite (NADPH route): step 1/1. Its function is as follows. Component of the sulfite reductase complex that catalyzes the 6-electron reduction of sulfite to sulfide. This is one of several activities required for the biosynthesis of L-cysteine from sulfate. The flavoprotein component catalyzes the electron flow from NADPH -&gt; FAD -&gt; FMN to the hemoprotein component. This Salmonella arizonae (strain ATCC BAA-731 / CDC346-86 / RSK2980) protein is Sulfite reductase [NADPH] flavoprotein alpha-component.